A 978-amino-acid chain; its full sequence is Chitin synthase 3 (978 aa).

The span at 1–13 (MGFNPQGQGNGPN) shows a compositional bias: low complexity. Disordered stretches follow at residues 1-95 (MGFN…FDGH) and 108-127 (GHYP…YEYP). A glycan (N-linked (GlcNAc...) asparagine) is linked at N72. A glycan (N-linked (GlcNAc...) asparagine) is linked at N604. A run of 7 helical transmembrane segments spans residues 641–661 (LVNV…TTII), 686–706 (IVNV…FVLA), 719–739 (VLSF…TGYL), 775–795 (LIII…FLYL), 803–823 (SFPQ…VYAF), 908–928 (VILW…DDFI), and 946–966 (VLLY…LWFI).

The protein belongs to the chitin synthase family. Class III subfamily.

It localises to the cell membrane. It carries out the reaction [(1-&gt;4)-N-acetyl-beta-D-glucosaminyl](n) + UDP-N-acetyl-alpha-D-glucosamine = [(1-&gt;4)-N-acetyl-beta-D-glucosaminyl](n+1) + UDP + H(+). Its function is as follows. Polymerizes chitin, a structural polymer of the cell wall and septum, by transferring the sugar moiety of UDP-GlcNAc to the non-reducing end of the growing chitin polymer. Is essential for viability. This Fusarium oxysporum f. sp. lycopersici (strain 4287 / CBS 123668 / FGSC 9935 / NRRL 34936) (Fusarium vascular wilt of tomato) protein is Chitin synthase 3.